The sequence spans 611 residues: DNA mismatch repair protein MutL (611 aa).

Belongs to the DNA mismatch repair MutL/HexB family.

This protein is involved in the repair of mismatches in DNA. It is required for dam-dependent methyl-directed DNA mismatch repair. May act as a 'molecular matchmaker', a protein that promotes the formation of a stable complex between two or more DNA-binding proteins in an ATP-dependent manner without itself being part of a final effector complex. This chain is DNA mismatch repair protein MutL, found in Bartonella bacilliformis (strain ATCC 35685 / KC583 / Herrer 020/F12,63).